A 210-amino-acid polypeptide reads, in one-letter code: MGDSDVGDRLPPPSSSDELSSFLRQILSRTPTAQPSSPPKSTNVSSAETFFPSVSGGAVSSVGYGVSETGQDKYAFEHKRSGAKQRNSLKRNIDAQFHNLSEKKRRSKINEKMKALQKLIPNSNKTDKASMLDEAIEYLKQLQLQVQTLAVMNGLGLNPMRLPQVPPPTHTRINETLEQDLNLETLLAAPHSLEPAKTSQGMCFSTATLL.

Positions 1-49 (MGDSDVGDRLPPPSSSDELSSFLRQILSRTPTAQPSSPPKSTNVSSAET) are disordered. A compositionally biased stretch (polar residues) spans 27-48 (LSRTPTAQPSSPPKSTNVSSAE). Residues 93–142 (IDAQFHNLSEKKRRSKINEKMKALQKLIPNSNKTDKASMLDEAIEYLKQL) enclose the bHLH domain.

As to quaternary structure, homodimer. In terms of tissue distribution, expressed constitutively in roots, leaves, stems, and flowers. Confined to the valve margins of the silique.

The protein localises to the nucleus. Its function is as follows. Required for the dehiscence of fruit, especially for the separation of the valve cells from the replum. Promotes the differentiation of a strip of labile nonlignified cells sandwiched between layers of lignified cells. The sequence is that of Transcription factor ALC (ALC) from Arabidopsis thaliana (Mouse-ear cress).